We begin with the raw amino-acid sequence, 559 residues long: Malate synthase, glyoxysomal (559 aa).

Arg-173 serves as the catalytic Proton acceptor. The Proton donor role is filled by Asp-459. Positions 557-559 match the Microbody targeting signal motif; that stretch reads CKL.

It belongs to the malate synthase family.

Its subcellular location is the glyoxysome. It catalyses the reaction glyoxylate + acetyl-CoA + H2O = (S)-malate + CoA + H(+). The protein operates within carbohydrate metabolism; glyoxylate cycle; (S)-malate from isocitrate: step 2/2. This is Malate synthase, glyoxysomal (LIP) from Zea mays (Maize).